The following is a 410-amino-acid chain: Sulfate adenylyltransferase (410 aa).

Belongs to the sulfate adenylyltransferase family.

The enzyme catalyses sulfate + ATP + H(+) = adenosine 5'-phosphosulfate + diphosphate. Its pathway is sulfur metabolism; hydrogen sulfide biosynthesis; sulfite from sulfate: step 1/3. This chain is Sulfate adenylyltransferase, found in Syntrophobacter fumaroxidans (strain DSM 10017 / MPOB).